The following is a 503-amino-acid chain: MEEFQGYLDLNRSRQHYLLYPLLFREYIYALAHDHGLNRXIGFENAGYDNKSSSIIVKRLITRMYQQNPLIFSAKDSIQNQFFGHNKNLYSQILSEGFAVIVEIPFSLRFLFSLERKXIPKSHNLRSIHSIFPFLEDKFTHLXYVSDVLIPYHIHFEILVQTLRYWVKDASSLHLLRLFLREYWNSLITPKKHITFFFKGNTRLFLFXYNSHICEYEYIFLFLRNQSSHLRSTSSGIFFERIYFYVKIXHFVKXFFDNNFQCILWFFKDPFMHYVXYQGKFFIASKDTPLLMNKWKCYLVNLWQYHFSVWFQPGRIDINQLCKYSFDFLGYRSSVRLNSSVVRSQMLENLFLINNAMKKFETIVPIIPLIGSLYKSNFCNTFGHPISKPTRIDSSDSDIIDRFLRICRNLSHYHSGSSKKKSLYRVKYILRLSCVKTLARKHKRTVRTFVKRLGSEFLEKFLTEEEVVLSLVXPRTYSTSRRLYRGQIWYLDITSINDLXNYE.

Belongs to the intron maturase 2 family. MatK subfamily.

It is found in the plastid. The protein resides in the chloroplast. In terms of biological role, usually encoded in the trnK tRNA gene intron. Probably assists in splicing its own and other chloroplast group II introns. This is Maturase K from Agonis flexuosa (Australian willow myrtle).